Consider the following 599-residue polypeptide: Dachshund homolog 2 (599 aa).

Positions 69-155 (RMVDMHGMKV…LITRKDFETL (87 aa)) are DACHbox-N. 3 disordered regions span residues 166–186 (RQMT…PKRS), 237–280 (LQGN…GPQH), and 370–409 (RIPE…MDHH). A compositionally biased stretch (polar residues) spans 237–262 (LQGNGSQNGTESEPDDLNSNTGGSES). The segment covering 389–405 (SQTSSHTSSSVSSSPSQ) has biased composition (low complexity). The DACHbox-C stretch occupies residues 453–533 (SSVETLLTNI…KTKRKLQEAL (81 aa)). Positions 459–554 (LTNIQGLLKV…QALKQATTSD (96 aa)) form a coiled coil.

The protein belongs to the DACH/dachshund family. As to quaternary structure, interacts with SIX6 and EYA2.

The protein localises to the nucleus. In terms of biological role, transcription factor that is involved in regulation of organogenesis. Seems to be a regulator for SIX1 and SIX6. Seems to act as a corepressor of SIX6 in regulating proliferation by directly repressing cyclin-dependent kinase inhibitors, including the p27Kip1 promoter. Is recruited with SIX6 to the p27Kip1 promoter in embryonal retina. SIX6 corepression also seems to involve NCOR1, TBL1, HDAC1 and HDAC3. May be involved together with PAX3, SIX1, and EYA2 in regulation of myogenesis. In the developing somite, expression of DACH2 and PAX3 is regulated by the overlying ectoderm, and DACH2 and PAX3 positively regulate each other's expression. Probably binds to DNA via its DACHbox-N domain. This is Dachshund homolog 2 (DACH2) from Homo sapiens (Human).